A 172-amino-acid polypeptide reads, in one-letter code: Adenine phosphoribosyltransferase (172 aa).

This sequence belongs to the purine/pyrimidine phosphoribosyltransferase family. In terms of assembly, homodimer.

It is found in the cytoplasm. The enzyme catalyses AMP + diphosphate = 5-phospho-alpha-D-ribose 1-diphosphate + adenine. Its pathway is purine metabolism; AMP biosynthesis via salvage pathway; AMP from adenine: step 1/1. In terms of biological role, catalyzes a salvage reaction resulting in the formation of AMP, that is energically less costly than de novo synthesis. This is Adenine phosphoribosyltransferase from Clostridium kluyveri (strain NBRC 12016).